A 466-amino-acid polypeptide reads, in one-letter code: Asparagine--tRNA ligase (466 aa).

Belongs to the class-II aminoacyl-tRNA synthetase family. As to quaternary structure, homodimer.

It localises to the cytoplasm. It catalyses the reaction tRNA(Asn) + L-asparagine + ATP = L-asparaginyl-tRNA(Asn) + AMP + diphosphate + H(+). This is Asparagine--tRNA ligase from Salmonella typhimurium (strain LT2 / SGSC1412 / ATCC 700720).